The chain runs to 417 residues: CinA-like protein (417 aa).

This sequence belongs to the CinA family.

This chain is CinA-like protein, found in Gloeothece citriformis (strain PCC 7424) (Cyanothece sp. (strain PCC 7424)).